A 40-amino-acid polypeptide reads, in one-letter code: Large ribosomal subunit protein bL36B (40 aa).

This sequence belongs to the bacterial ribosomal protein bL36 family.

The chain is Large ribosomal subunit protein bL36B from Clavibacter michiganensis subsp. michiganensis (strain NCPPB 382).